The following is a 243-amino-acid chain: MSGHSKWHNIQGRKNAQDAKRGKVFQKLSREIYMAAKSGGPDPSGNPTLRMVMDKARAANMPKTNIERAIKKAEGNSDEHYDEITYEGYAPGGVAVLVEALTDNKNRTASDVRVAFTRNGGSLGATGSVAYMFDRKGYIVIDRSTTDADEDQVLLDVMDAGGDDLETSDDAFEIYTDPKQFTAVRDALEKAGYKLANAELTMIPQNTTPVPADKKEQFTHLIDALEDNDDVSNVYTAAADDDE.

The tract at residues 1–22 (MSGHSKWHNIQGRKNAQDAKRG) is disordered.

It belongs to the TACO1 family.

Its subcellular location is the cytoplasm. This chain is Probable transcriptional regulatory protein LGAS_1276, found in Lactobacillus gasseri (strain ATCC 33323 / DSM 20243 / BCRC 14619 / CIP 102991 / JCM 1131 / KCTC 3163 / NCIMB 11718 / NCTC 13722 / AM63).